Here is a 126-residue protein sequence, read N- to C-terminus: MDIENWDTIDQLMADSAQPDFEDWGDLGDLMPDVLPESNGSSSGTATDNDNRCWDHGCNGKKFLNHSNLVRHRRENGSARPRFTCPMCGAYFSRSTARNQHLEKKSCNRVRRYSNGRERPRPRVKD.

Disordered regions lie at residues 17 to 52 (AQPD…NDNR) and 103 to 126 (EKKS…RVKD). Over residues 38–48 (SNGSSSGTATD) the composition is skewed to polar residues. The segment at 51 to 76 (NRCWDHGCNGKKFLNHSNLVRHRREN) adopts a C2H2-type 1; degenerate zinc-finger fold. The C2H2-type 2; degenerate zinc-finger motif lies at 83 to 115 (FTCPMCGAYFSRSTARNQHLEKKSCNRVRRYSN). Residues 115–126 (NGRERPRPRVKD) show a composition bias toward basic and acidic residues.

It belongs to the GLI C2H2-type zinc-finger protein family.

Its subcellular location is the nucleus. Functionally, transcription factor that probably regulates the expression of the gene cluster that mediates the biosynthesis of squalestatin S1 (SQS1, also known as zaragozic acid A), a heavily oxidized fungal polyketide that offers potent cholesterol lowering activity by targeting squalene synthase (SS). This chain is C2H2-type zinc-finger transcription factor M5, found in Phoma sp. (strain ATCC 20986 / MF5453).